The chain runs to 105 residues: POU domain, class 3, transcription factor 3 (105 aa).

Residues 1-49 form the POU-specific domain; the sequence is QADVGLALGTLYGNVFSQTTICRFEALQLSFKNMCKLKPLLNKWLEEAD. The segment at residues 67-105 is a DNA-binding region (homeobox); that stretch reads KRKKRTSIEVSVKGALESHFLKCPKPAAQEITTLADSLQ.

It belongs to the POU transcription factor family. Class-3 subfamily.

The protein resides in the nucleus. The polypeptide is POU domain, class 3, transcription factor 3 (pou3f3) (Xenopus laevis (African clawed frog)).